A 615-amino-acid polypeptide reads, in one-letter code: Sodium-dependent dopamine transporter (615 aa).

Positions 1–39 (MQLVPTDDPDEKIGRTSNGMQNATLPIDGPVNTEPKDPA) are disordered. The Cytoplasmic segment spans residues 1-46 (MQLVPTDDPDEKIGRTSNGMQNATLPIDGPVNTEPKDPAREQWSGK). The segment covering 15-24 (RTSNGMQNAT) has biased composition (polar residues). The chain crosses the membrane as a helical span at residues 47–72 (LDFLLSVVGFAVDLGNIWRFPYLCFK). Na(+)-binding residues include G55, A57, V58, and N62. Topologically, residues 73 to 76 (NGGG) are extracellular. Residues 77 to 100 (VFLIPYSIMVLLTGVPLFYMELCL) traverse the membrane as a helical segment. Residues 101-120 (GQYYRKGAITTWGRICPLFK) lie on the Cytoplasmic side of the membrane. A helical transmembrane segment spans residues 121-151 (GIGYCVILTAFYVDFFYNVILAWGLHYLYTS). Topologically, residues 152 to 229 (FSFNLPWASC…IRSVTDLGNV (78 aa)) are extracellular. C161 and C170 are disulfide-bonded. N162 and N187 each carry an N-linked (GlcNAc...) asparagine glycan. Residues 230–250 (RWDIALSLFVVYLICYFSMWK) form a helical membrane-spanning segment. Topologically, residues 251–253 (GIH) are cytoplasmic. Residues 254–278 (TSGKVVWFTALFPYVVLGILFIRGV) form a helical membrane-spanning segment. Residues 279 to 302 (TLPGWQNGIEYYLRPNFEMLKRPS) lie on the Extracellular side of the membrane. A helical membrane pass occupies residues 303 to 328 (VWQDAATQVFFSLGPGFGVLMAYSSY). S314 is a Na(+) binding site. Over 329–334 (NDFHNN) the chain is Cytoplasmic. A helical membrane pass occupies residues 335–358 (VYVDALFTSFINCATSFLSGFVIF). N346 serves as a coordination point for Na(+). The Extracellular portion of the chain corresponds to 359-398 (SVLGYMSCKSGKPIEAVAQEGPGLVFVVYPEALSTMPYAP). Residues 399-424 (FWSVLFFLMLMTLGLDSSFGGSEAII) traverse the membrane as a helical segment. The Na(+) site is built by L411, D414, and S415. Topologically, residues 425–439 (TGLSDEFPILKKNRE) are cytoplasmic. A helical membrane pass occupies residues 440 to 460 (VFVGCLFAFYMVIGIAMCTEG). Position 461 (G461) is a topological domain, extracellular. Residues 462–488 (ILIMEWLIIYGTTWGLLIAVFCEAMVI) traverse the membrane as a helical segment. Over 489 to 518 (AYIYGLRQFVHDVKEMMGFRPGNYWKFCWS) the chain is Cytoplasmic. Residues 519-541 (CAAPFILLSMITSNFINYQALTY) traverse the membrane as a helical segment. Over 542–544 (QDY) the chain is Extracellular. A helical transmembrane segment spans residues 545 to 565 (TYPTAANVIGIIFALSGASFI). The Cytoplasmic portion of the chain corresponds to 566 to 615 (PLVGIYKFVNARGNTISEKWQRVTMPYRKRPNQTEYIPIPTTQPHSDIML).

The protein belongs to the sodium:neurotransmitter symporter (SNF) (TC 2.A.22) family.

It localises to the cell membrane. Functionally, dopamine transporter. Terminates the action of dopamine by its high affinity sodium-dependent reuptake into presynaptic terminals. Plays a role in the learned avoidance behavior of animals exposed to food that induces mitochondrial stress. The sequence is that of Sodium-dependent dopamine transporter from Caenorhabditis elegans.